Consider the following 484-residue polypeptide: Hemogen (484 aa).

Positions 1-25 are enriched in basic and acidic residues; sequence MDLGKDQSHLKHHQTPDPHQEENHS. Disordered regions lie at residues 1–32 and 44–91; these read MDLGKDQSHLKHHQTPDPHQEENHSPEVIGTW and KAEV…PQPQ. Residues 7-87 form a necessary for nuclear localization region; sequence QSHLKHHQTP…RQQNTELKVE (81 aa). Positions 61–79 are enriched in basic residues; sequence KKRKQQRTGKGNRRGRKRQ. A phosphoserine mark is found at Ser-123, Ser-159, Ser-181, Ser-188, and Ser-201. The residue at position 246 (Thr-246) is a Phosphothreonine. Disordered stretches follow at residues 265–290, 306–369, and 386–471; these read DVPKGYILDTDQNPAEPEEYNETDQG, EPKD…YSPE, and QETS…ILNE. Positions 306 to 320 are enriched in basic and acidic residues; that stretch reads EPKDLSTKTHQESAE. A phosphoserine mark is found at Ser-349 and Ser-353. Residue Thr-360 is modified to Phosphothreonine. Ser-363 and Ser-367 each carry phosphoserine. Basic and acidic residues-rich tracts occupy residues 413–428, 438–447, and 454–463; these read YKNKDVPKECFPEPHQ, PKAHQEDAKD, and EMKEKPKEEP.

As to expression, expressed in hematopoietic precursor cells, thyroid and spermatids (at protein level). Expressed in bone marrow, testis, thymus. Expressed in prostate cancer and ovarian cancer. Also expressed in thymus and thyroid tumors, non-Hodgkin lymphoma, various leukemia cell lines, peripheral blood mononuclear cells (PBMCs) and bone marrow mononuclear cells (BMMCs) of patients with leukemia.

Its subcellular location is the nucleus. Regulates the proliferation and differentiation of hematopoietic cells. Overexpression block the TPA-induced megakaryocytic differentiation in the K562 cell model. May also prevent cell apoptosis through the activation of the nuclear factor-kappa B (NF-kB). The polypeptide is Hemogen (HEMGN) (Homo sapiens (Human)).